A 290-amino-acid polypeptide reads, in one-letter code: Phosphoribulokinase (290 aa).

12–20 (GSSGAGTTS) is an ATP binding site.

Belongs to the phosphoribulokinase family.

The catalysed reaction is D-ribulose 5-phosphate + ATP = D-ribulose 1,5-bisphosphate + ADP + H(+). It participates in carbohydrate biosynthesis; Calvin cycle. The protein is Phosphoribulokinase (cbbP) of Nitrobacter vulgaris.